The following is a 487-amino-acid chain: Arginine ADP-riboxanase CopC (487 aa).

Residues 1–12 (MRVENHSPSLSK) show a composition bias toward polar residues. The tract at residues 1–27 (MRVENHSPSLSKLNPPEAGSGDPTAIG) is disordered. NAD(+) is bound by residues H137, Q138, S139, L143, A150, A152, N154, and L157. Residue H137 participates in nicotinamide binding. ADP-D-ribose-binding residues include S139 and L143. Residues A152, N154, L157, G166, N167, T168, and F183 each coordinate ADP-D-ribose. Position 167 (N167) interacts with NAD(+). F183 contacts NAD(+). Residues F183, F184, H202, and F207 each coordinate nicotinamide. H202 is an NAD(+) binding site. ADP-D-ribose is bound by residues F207 and D230. Positions 230 and 325 each coordinate NAD(+). E325 serves as a coordination point for nicotinamide. E325 is an active-site residue. ANK repeat units lie at residues 368-398 (DAVT…EAGD) and 444-476 (SGET…LLSE).

Belongs to the OspC family. In terms of assembly, interacts with host calmodulin (CALM1, CALM2 and/or CALM3); specifically interacts with the apo form of calmodulin and calmodulin-binding is required to mediate arginine ADP-riboxanation of host caspases.

Its subcellular location is the secreted. The protein resides in the host cytoplasm. It catalyses the reaction L-arginyl-[protein] + NAD(+) = ADP-riboxanated L-argininyl-[protein] + nicotinamide + NH4(+) + H(+). With respect to regulation, interaction with host calmodulin (CALM1, CALM2 and/or CALM3) is required to mediate arginine ADP-riboxanation of host caspases. In terms of biological role, ADP-riboxanase effector that inhibits host cell programmed cell death. Acts by mediating arginine ADP-riboxanation of host caspases (CASP3, CASP7, CASP8 and CASP9), blocking their processing and activation. ADP-riboxanation of host apoptotic caspases (CASP3, CASP7, CASP8 and CASP9) prevents their activation, thereby inhibiting host cell apoptosis. ADP-riboxanation of host CASP8 also inhibits host cell necroptosis. ADP-riboxanation of host CASP3 also abolishes pyroptosis by preventing its ability to cleave GSDME. May also able to inactivate CASP4/CASP11, blocking inhibiting LPS-induced pyroptosis; however this activity is unsure in vivo. ADP-riboxanation takes place in several steps: CopC first binds host caspases and NAD(+); NAD(+) is hydrolyzed to nicotinamide and ADP-D-ribose. CopC then transfers the ADP-D-ribose to the modified arginine of caspases and forms the ADP-D-ribose-deacylization on arginine, leading to deamination to remove one N-omega group on target arginine. This is Arginine ADP-riboxanase CopC from Chromobacterium violaceum (strain ATCC 12472 / DSM 30191 / JCM 1249 / CCUG 213 / NBRC 12614 / NCIMB 9131 / NCTC 9757 / MK).